The primary structure comprises 605 residues: MGGCFSKPKPVELKIEVVLPEKERGKEELSASGKGSPRGYQGNGTARHFHAEERLPTPQPYPSPQDCVEATVCHVKDLENGQMREVELGWGKVLLVKDNGEFHALGHKCPHYGAPLVKGVLSRGRVRCPWHGACFNISTGDLEDFPGLDSLHKFQVKIEKEKVTIRASKQALQLQRRTKVMAKCISPSAGHSSSTNVLIVGAGAAGLVCAETLRQEGFSDRIVLCTLDRHLPYDRAKLSKSLDAQPEQLALRPKEFFRAYGIEMLTEAQVVTVDVRNKKVVFKDGFKLEYSKLLLAPGSSPKTLTCKGKDVENVFTIRTPEDANRVLRLARGRNAVVVGAGFLGMEVAAYLTEKAHSVSVVELEETPFRRFLGERVGRALMKMFENNRVKFYMQTEVSELRAQEGKLQEVVLKSSKVLRADVCVLGIGAVPATGFLRQSGIGLDSRGFIPVNKMMQTNVPGVFAAGDAVTFPLAWRNNRKVNIPHWQMAHAQGRVAAQNMLAQEAEINTVPYLWTAMFGKSLRYAGYGEGFDDVIIQGDLEELKFVAFYTKSDEVIAVASMNYDPIVSKVAEVLASGRAIRKREVELFMLHSKTGDMSWLTGKGS.

Over residues 18–29 (VLPEKERGKEEL) the composition is skewed to basic and acidic residues. The disordered stretch occupies residues 18–44 (VLPEKERGKEELSASGKGSPRGYQGNG). Residues 70–165 (ATVCHVKDLE…VKIEKEKVTI (96 aa)) form the Rieske domain. Residues C109, H111, C128, and H131 each contribute to the [2Fe-2S] cluster site. FAD contacts are provided by residues 201 to 205 (GAGAA), R235, K240, V270, D467, and W514.

The protein belongs to the FAD-dependent oxidoreductase family.

The protein resides in the mitochondrion. Induces apoptosis through a caspase dependent pathway. Reduces mitochondrial membrane potential. This Mus musculus (Mouse) protein is Apoptosis-inducing factor 3 (Aifm3).